The following is a 380-amino-acid chain: uncharacterized protein (380 aa).

2 HTH tetR-type domains span residues 3–63 and 201–262; these read ESAE…KEGL and VRTR…CAEI. A DNA-binding region (H-T-H motif) is located at residues 225–244; that stretch reads TISDITRKSNIRRATFYDHY.

This is an uncharacterized protein from Bacillus subtilis (strain 168).